A 178-amino-acid polypeptide reads, in one-letter code: Ribosome maturation factor RimP (178 aa).

The protein belongs to the RimP family.

The protein resides in the cytoplasm. Required for maturation of 30S ribosomal subunits. The sequence is that of Ribosome maturation factor RimP from Corynebacterium glutamicum (strain ATCC 13032 / DSM 20300 / JCM 1318 / BCRC 11384 / CCUG 27702 / LMG 3730 / NBRC 12168 / NCIMB 10025 / NRRL B-2784 / 534).